A 182-amino-acid chain; its full sequence is MTIEPKGKYMESRGIFLYINHNTRTTKGYYYVRKTTDDSKGRLKDDEKRYPVKMEHNQIIPTKPIPNDKLKKEIENFKFFVQYANFKDINDYKNGDISYNPNIPSYSAKYQLNNNDYNVKQLRKRYDIPTNQAPKLLLKGDGDLKGSSVGSKNLEFTFVENKEEDIFFTDAVQFTPSEDDES.

This sequence belongs to the staphylococcal tandem lipoprotein family.

This is an uncharacterized protein from Staphylococcus haemolyticus (strain JCSC1435).